The following is a 334-amino-acid chain: Dual specificity mitogen-activated protein kinase kinase 6 (334 aa).

The span at 1 to 11 shows a compositional bias: basic residues; it reads MSQSKGKKRNP. Residues 1–34 are disordered; that stretch reads MSQSKGKKRNPGLKIPKEAFEQPQTSSTPPRDLD. A d domain region spans residues 4 to 19; it reads SKGKKRNPGLKIPKEA. In terms of domain architecture, Protein kinase spans 53–314; it reads LEPIVELGRG…YPELMQHPFF (262 aa). Residues 59–67 and Lys-82 each bind ATP; that span reads LGRGAYGVV. Asp-179 acts as the Proton acceptor in catalysis. Ser-207 is modified (phosphoserine; by MAPK3). Thr-211 carries the post-translational modification Phosphothreonine; by MAPK3. The tract at residues 311-334 is DVD domain; sequence HPFFTVHESKAADVASFVKLILGD.

This sequence belongs to the protein kinase superfamily. STE Ser/Thr protein kinase family. MAP kinase kinase subfamily. As to quaternary structure, dimer. Interacts (via its D domain) with its substrates MAPK11, MAPK12, MAPK13 and MAPK14. Interacts (via its DVD domain) with MAP3Ks activators like MAP3K5/ASK1, MAP3K1/MEKK1, MAP3K2/MEKK2, MAP3K3/MEKK3, MAP3K4/MEKK4, MAP3K7/TAK1, MAP3K11/MLK3 and MAP3K17/TAOK2. Interacts with DCTN1. Interacts with EIF2AK2/PKR. Post-translationally, weakly autophosphorylated. Phosphorylated at Ser-207 and Thr-211 by the majority of M3Ks, such as MAP3K5/ASK1, MAP3K1/MEKK1, MAP3K2/MEKK2, MAP3K3/MEKK3, MAP3K4/MEKK4, MAP3K7/TAK1, MAP3K11/MLK3 and MAP3K17/TAOK2. In terms of processing, in response to genotoxic stress, MAP3K-phosphorylated MAP2K6 is ubiquitinated and degraded by the SCF(FBXO31) complex.

The protein localises to the nucleus. It localises to the cytoplasm. The protein resides in the cytoskeleton. The catalysed reaction is L-seryl-[protein] + ATP = O-phospho-L-seryl-[protein] + ADP + H(+). It catalyses the reaction L-threonyl-[protein] + ATP = O-phospho-L-threonyl-[protein] + ADP + H(+). It carries out the reaction L-tyrosyl-[protein] + ATP = O-phospho-L-tyrosyl-[protein] + ADP + H(+). Activated by dual phosphorylation on Ser-207 and Thr-211 in response to a variety of cellular stresses, including UV radiation, osmotic shock, hypoxia, inflammatory cytokines, interferon gamma (IFNG), and less often by growth factors. MAP2K6/MKK6 is activated by the majority of M3Ks, such as MAP3K5/ASK1, MAP3K1/MEKK1, MAP3K2/MEKK2, MAP3K3/MEKK3, MAP3K4/MEKK4, MAP3K7/TAK1, MAP3K11/MLK3 and MAP3K17/TAOK2. In terms of biological role, dual specificity protein kinase which acts as an essential component of the MAP kinase signal transduction pathway. With MAP3K3/MKK3, catalyzes the concomitant phosphorylation of a threonine and a tyrosine residue in the MAP kinases p38 MAPK11, MAPK12, MAPK13 and MAPK14 and plays an important role in the regulation of cellular responses to cytokines and all kinds of stresses. Especially, MAP2K3/MKK3 and MAP2K6/MKK6 are both essential for the activation of MAPK11 and MAPK13 induced by environmental stress, whereas MAP2K6/MKK6 is the major MAPK11 activator in response to TNF. MAP2K6/MKK6 also phosphorylates and activates PAK6. The p38 MAP kinase signal transduction pathway leads to direct activation of transcription factors. Nuclear targets of p38 MAP kinase include the transcription factors ATF2 and ELK1. Within the p38 MAPK signal transduction pathway, MAP3K6/MKK6 mediates phosphorylation of STAT4 through MAPK14 activation, and is therefore required for STAT4 activation and STAT4-regulated gene expression in response to IL-12 stimulation. The pathway is also crucial for IL-6-induced SOCS3 expression and down-regulation of IL-6-mediated gene induction; and for IFNG-dependent gene transcription. Has a role in osteoclast differentiation through NF-kappa-B transactivation by TNFSF11, and in endochondral ossification and since SOX9 is another likely downstream target of the p38 MAPK pathway. MAP2K6/MKK6 mediates apoptotic cell death in thymocytes. Acts also as a regulator for melanocytes dendricity, through the modulation of Rho family GTPases. In Mus musculus (Mouse), this protein is Dual specificity mitogen-activated protein kinase kinase 6 (Map2k6).